The chain runs to 278 residues: Envelope glycoprotein L (278 aa).

A signal peptide spans 1 to 30; it reads MCRRPDCGFSFSPGPVILLWCCLLLPIVSS. Residues 43–256 enclose the gL betaherpesvirus-type domain; it reads VPAECPELTR…DKYYAGLPPE (214 aa). A disulfide bridge links C154 with C159.

This sequence belongs to the herpesviridae glycoprotein L (gL) family. Betaherpesvirinae gL subfamily. As to quaternary structure, interacts with glycoprotein H (gH); this interaction is necessary for the correct processing and cell surface expression of gH. Forms the envelope pentamer complex (PC) composed of gH, gL, UL128, UL130, and UL131A. The pentamer interacts with host NRP2. Forms the envelope trimer complex composed of gH, gL, and gO. The trimer interacts with host PDGFRA. The trimer also interacts with host EPHA2.

It localises to the virion membrane. The protein localises to the host cell membrane. It is found in the host Golgi apparatus. Its subcellular location is the host trans-Golgi network. Functionally, the heterodimer glycoprotein H-glycoprotein L is required for the fusion of viral and plasma membranes leading to virus entry into the host cell. Acts as a functional inhibitor of gH and maintains gH in an inhibited form. Upon binding to host integrins, gL dissociates from gH leading to activation of the viral fusion glycoproteins gB and gH. In human cytomegalovirus, forms two distincts complexes to mediate viral entry, a trimer and a pentamer at the surface of the virion envelope. The gH-gL-gO trimer is required for infection in fibroblasts by interacting with host PDGFRA, and in glioblastoma cells by interacting with host EPHA2. The gH-gL-UL128-UL130-UL131A pentamer is essential for viral entry in epithelial, endothelial and myeloid cells via interaction with host NRP2. The sequence is that of Envelope glycoprotein L from Human cytomegalovirus (strain 5035) (HHV-5).